A 545-amino-acid chain; its full sequence is Chaperonin GroEL (545 aa).

ATP-binding positions include Thr-30 to Pro-33, Lys-51, Asp-87 to Thr-91, Gly-415, Asn-483 to Ala-485, and Asp-499.

Belongs to the chaperonin (HSP60) family. Forms a cylinder of 14 subunits composed of two heptameric rings stacked back-to-back. Interacts with the co-chaperonin GroES.

It localises to the cytoplasm. The catalysed reaction is ATP + H2O + a folded polypeptide = ADP + phosphate + an unfolded polypeptide.. Together with its co-chaperonin GroES, plays an essential role in assisting protein folding. The GroEL-GroES system forms a nano-cage that allows encapsulation of the non-native substrate proteins and provides a physical environment optimized to promote and accelerate protein folding. In Aquifex aeolicus (strain VF5), this protein is Chaperonin GroEL.